Reading from the N-terminus, the 276-residue chain is Diaminopimelate epimerase (276 aa).

Residues N13, Q46, and N66 each contribute to the substrate site. C75 serves as the catalytic Proton donor. Substrate contacts are provided by residues 76–77 (GN), N159, N192, and 210–211 (ER). The Proton acceptor role is filled by C219. 220 to 221 (GT) serves as a coordination point for substrate.

It belongs to the diaminopimelate epimerase family. In terms of assembly, homodimer.

The protein resides in the cytoplasm. It carries out the reaction (2S,6S)-2,6-diaminopimelate = meso-2,6-diaminopimelate. The protein operates within amino-acid biosynthesis; L-lysine biosynthesis via DAP pathway; DL-2,6-diaminopimelate from LL-2,6-diaminopimelate: step 1/1. Catalyzes the stereoinversion of LL-2,6-diaminopimelate (L,L-DAP) to meso-diaminopimelate (meso-DAP), a precursor of L-lysine and an essential component of the bacterial peptidoglycan. The protein is Diaminopimelate epimerase of Aeromonas hydrophila subsp. hydrophila (strain ATCC 7966 / DSM 30187 / BCRC 13018 / CCUG 14551 / JCM 1027 / KCTC 2358 / NCIMB 9240 / NCTC 8049).